The sequence spans 893 residues: NEDD4-binding protein 1 (893 aa).

The KH-like domain maps to 59-143; the sequence is QEAVHSAKEY…IQQFVKLFES (85 aa). The segment at 213-243 is disordered; sequence EYTQSAATGPSSARDEVVVQEDSRNKARTPV. Over residues 214 to 223 the composition is skewed to polar residues; the sequence is YTQSAATGPS. A compositionally biased stretch (basic and acidic residues) spans 225-237; the sequence is ARDEVVVQEDSRN. Thr-241 carries the post-translational modification Phosphothreonine. 3 positions are modified to phosphoserine: Ser-257, Ser-269, and Ser-299. 3 disordered regions span residues 273 to 339, 394 to 433, and 472 to 564; these read DALS…DGKD, RDFP…QSHT, and IWGS…PPLP. Composition is skewed to polar residues over residues 405–433 and 523–537; these read ASQS…QSHT and GFQQ…NNTK. The span at 551–564 shows a compositional bias: pro residues; sequence QPKPNYPPLSPPLP. Position 560 is a phosphoserine (Ser-560). The RNase NYN domain occupies 615 to 767; it reads LKHIVIDGSN…LGRNGPRLEE (153 aa). A disordered region spans residues 793-820; the sequence is PGFRSPSTQVANNSHQPPPRIQTSSSPW. Residues 797-820 are compositionally biased toward polar residues; sequence SPSTQVANNSHQPPPRIQTSSSPW. Positions 846–893 are coCUN; that stretch reads RSSAETSELREALLKIFPDSEQKLKIDQILAAHPYMKDLNALSALVLD.

Belongs to the N4BP1 family. As to quaternary structure, interacts with NEDD4. Interacts with ITCH (via WW domain 2). Proteolytically cleaved by CASP8 downstream of TLR3 or TLR4, leading to its inactivation. Mainly cleaved at Asp-488 by CASP8. Cleaved by caspase-like protein MALT1, leading to its inactivation. In terms of processing, mono- and polyubiquitinated on the CoCUN region. Monoubiquitinated by NEDD4. Polyubiquitinated, leading to its degradation by the proteasome. Sumoylated with SUMO1, abrogating polyubiquitination and subsequent degradation. Desumoylated by SENP1, leading to accumulation in PML nuclear bodies.

The protein localises to the cytoplasm. Its subcellular location is the cytosol. It localises to the nucleus. It is found in the nucleolus. The protein resides in the PML body. Its activity is regulated as follows. Proteolytic cleavage by CASP8 or MALT1 leads to its inactivation. Its function is as follows. Potent suppressor of cytokine production that acts as a regulator of innate immune signaling and inflammation. Acts as a key negative regulator of select cytokine and chemokine responses elicited by TRIF-independent Toll-like receptors (TLRs), thereby limiting inflammatory cytokine responses to minor insults. In response to more threatening pathogens, cleaved by CASP8 downstream of TLR3 or TLR4, leading to its inactivation, thereby allowing production of inflammatory cytokines. Acts as a restriction factor against some viruses: restricts viral replication by binding to mRNA viruses and mediating their degradation via its ribonuclease activity. Also acts as an inhibitor of the E3 ubiquitin-protein ligase ITCH: acts by interacting with the second WW domain of ITCH, leading to compete with ITCH's substrates and impairing ubiquitination of substrates. The chain is NEDD4-binding protein 1 from Mus musculus (Mouse).